A 565-amino-acid chain; its full sequence is Probable alpha-L-arabinofuranosidase A (565 aa).

The N-terminal stretch at 1 to 19 is a signal peptide; that stretch reads MPLSAAIKSSLSVSVRADA. N-linked (GlcNAc...) asparagine glycans are attached at residues Asn71, Asn91, Asn128, Asn303, Asn362, Asn486, and Asn501.

This sequence belongs to the glycosyl hydrolase 51 family.

It localises to the secreted. The enzyme catalyses Hydrolysis of terminal non-reducing alpha-L-arabinofuranoside residues in alpha-L-arabinosides.. The protein operates within glycan metabolism; L-arabinan degradation. Its function is as follows. Alpha-L-arabinofuranosidase involved in the degradation of arabinoxylan, a major component of plant hemicellulose. Acts only on small linear 1,5-alpha-linked L-arabinofuranosyl oligosaccharides. In Emericella nidulans (strain FGSC A4 / ATCC 38163 / CBS 112.46 / NRRL 194 / M139) (Aspergillus nidulans), this protein is Probable alpha-L-arabinofuranosidase A (abfA).